Here is a 514-residue protein sequence, read N- to C-terminus: Probable lysine--tRNA ligase, cytoplasmic (514 aa).

This sequence belongs to the class-II aminoacyl-tRNA synthetase family. As to quaternary structure, homodimer.

The protein resides in the cytoplasm. It carries out the reaction tRNA(Lys) + L-lysine + ATP = L-lysyl-tRNA(Lys) + AMP + diphosphate. This is Probable lysine--tRNA ligase, cytoplasmic from Vairimorpha ceranae (strain BRL01) (Microsporidian parasite).